The sequence spans 144 residues: Large ribosomal subunit protein uL13 (144 aa).

This sequence belongs to the universal ribosomal protein uL13 family. In terms of assembly, part of the 50S ribosomal subunit.

Its function is as follows. This protein is one of the early assembly proteins of the 50S ribosomal subunit, although it is not seen to bind rRNA by itself. It is important during the early stages of 50S assembly. The polypeptide is Large ribosomal subunit protein uL13 (Heliobacterium modesticaldum (strain ATCC 51547 / Ice1)).